A 479-amino-acid polypeptide reads, in one-letter code: Protein C-ets-2 (479 aa).

Residues 88-173 (DTFSGFTKEQ…EHLEQMIKDS (86 aa)) enclose the PNT domain. Residues 373-453 (IQLWQFLLEL…SGKRYVYRFV (81 aa)) constitute a DNA-binding region (ETS).

Belongs to the ETS family.

Its subcellular location is the nucleus. Probable transcription factor. In Gallus gallus (Chicken), this protein is Protein C-ets-2 (ETS2).